Here is a 539-residue protein sequence, read N- to C-terminus: ATP synthase subunit beta (539 aa).

Residues 1–44 (MAKTPAEKPATAAKKPAAPKAAAAPKAAAAKAPAAAKAPAAKKP) form a disordered region. An ATP-binding site is contributed by 212–219 (GGAGVGKT).

Belongs to the ATPase alpha/beta chains family. F-type ATPases have 2 components, CF(1) - the catalytic core - and CF(0) - the membrane proton channel. CF(1) has five subunits: alpha(3), beta(3), gamma(1), delta(1), epsilon(1). CF(0) has three main subunits: a(1), b(2) and c(9-12). The alpha and beta chains form an alternating ring which encloses part of the gamma chain. CF(1) is attached to CF(0) by a central stalk formed by the gamma and epsilon chains, while a peripheral stalk is formed by the delta and b chains.

Its subcellular location is the cell inner membrane. It catalyses the reaction ATP + H2O + 4 H(+)(in) = ADP + phosphate + 5 H(+)(out). In terms of biological role, produces ATP from ADP in the presence of a proton gradient across the membrane. The catalytic sites are hosted primarily by the beta subunits. The sequence is that of ATP synthase subunit beta from Caulobacter vibrioides (strain ATCC 19089 / CIP 103742 / CB 15) (Caulobacter crescentus).